A 1165-amino-acid polypeptide reads, in one-letter code: Disease resistance protein RPS4B (1165 aa).

Positions 12-174 (PQHQVFINFR…EIVKEVKKVL (163 aa)) constitute a TIR domain. Residue glutamate 86 is part of the active site. Residues 211–474 (KQRLKELEEK…FLDIACFRSQ (264 aa)) form the NB-ARC domain. Residues 592–613 (SHCPHECLTNNKINMPDGLELP) form an LRR 1 repeat. An LRR 2; degenerate repeat occupies 614 to 635 (LKEVRCLHWLKFPLEELPNDFD). 6 LRR repeats span residues 636–659 (PINLVDLKLPYSEIERLWDGVKDT), 684–703 (NLQRLNLEGCTSLESLRDVN), 704–725 (LTSLKTLTLSNCSNFKEFPLIP), 726–748 (ENLKALYLDGTSISQLPDNVGNL), 772–794 (LKTLQKLVLSGCSKLKEFPEINK), and 795–818 (SSLKILLLDGTSIKTMPQLPSVQY). The LRR 9; degenerate repeat unit spans residues 819–836 (LCLSRNDHLIYLPAGINQ). One copy of the LRR 10 repeat lies at 837-863 (VSQLTRLDLKYCTKLTYVPELPPTLQY).

The protein belongs to the disease resistance TIR-NB-LRR family. Interacts with RRS1B. RPS4B-RRS1B heterodimer interacts with the bacterial effectors AvrRps4 and PopP2.

It is found in the nucleus. It carries out the reaction NAD(+) + H2O = ADP-D-ribose + nicotinamide + H(+). Disease resistance (R) protein that specifically recognizes the AvrRps4 type III effector avirulence protein from P.syringae. Heterodimerization with RRS1B is required to form a functional complex to recognize AvrRps4 and to mediate the hypersensitive response. The chain is Disease resistance protein RPS4B from Arabidopsis thaliana (Mouse-ear cress).